A 61-amino-acid polypeptide reads, in one-letter code: Small ribosomal subunit protein uS14 (61 aa).

Positions 24, 27, 40, and 43 each coordinate Zn(2+).

Belongs to the universal ribosomal protein uS14 family. Zinc-binding uS14 subfamily. Part of the 30S ribosomal subunit. Contacts proteins S3 and S10. The cofactor is Zn(2+).

Functionally, binds 16S rRNA, required for the assembly of 30S particles and may also be responsible for determining the conformation of the 16S rRNA at the A site. This is Small ribosomal subunit protein uS14 from Ureaplasma parvum serovar 3 (strain ATCC 27815 / 27 / NCTC 11736).